Reading from the N-terminus, the 883-residue chain is Phosphoenolpyruvate carboxylase (883 aa).

Residues His-138 and Lys-546 contribute to the active site.

The protein belongs to the PEPCase type 1 family. Requires Mg(2+) as cofactor.

The catalysed reaction is oxaloacetate + phosphate = phosphoenolpyruvate + hydrogencarbonate. Functionally, forms oxaloacetate, a four-carbon dicarboxylic acid source for the tricarboxylic acid cycle. This Salmonella schwarzengrund (strain CVM19633) protein is Phosphoenolpyruvate carboxylase.